The following is a 333-amino-acid chain: tRNA pseudouridine synthase B (333 aa).

Catalysis depends on Asp46, which acts as the Nucleophile.

This sequence belongs to the pseudouridine synthase TruB family. Type 1 subfamily.

The enzyme catalyses uridine(55) in tRNA = pseudouridine(55) in tRNA. Its function is as follows. Responsible for synthesis of pseudouridine from uracil-55 in the psi GC loop of transfer RNAs. In Gluconobacter oxydans (strain 621H) (Gluconobacter suboxydans), this protein is tRNA pseudouridine synthase B.